Here is a 322-residue protein sequence, read N- to C-terminus: Pre-mRNA-splicing factor NTR2 (322 aa).

The tract at residues 1 to 30 is disordered; the sequence is MAIKKRNKIRLPSGSPEEVGIDGSAHKPMQ. S40 is modified (phosphoserine). Positions 113 to 137 are disordered; the sequence is LLSDSSEAGSSSEGEHISSIPTRGE. Positions 115-132 are enriched in low complexity; sequence SDSSEAGSSSEGEHISSI. Residues S153 and S197 each carry the phosphoserine modification.

In terms of assembly, component of the NTR complex (NTC-related complex), composed of NTR1, NTR2 and PRP43. Interacts with CLF1, NTR1 and PRP43.

It localises to the cytoplasm. The protein localises to the nucleus. Involved in pre-mRNA splicing and spliceosome disassembly. Promotes release of excised lariat intron from the spliceosome by acting as a receptor for PRP43. This targeting of PRP43 leads to disassembly of the spliceosome with the separation of the U2, U5, U6 snRNPs and the NTC complex. This Saccharomyces cerevisiae (strain ATCC 204508 / S288c) (Baker's yeast) protein is Pre-mRNA-splicing factor NTR2 (NTR2).